The sequence spans 448 residues: uncharacterized protein (448 aa).

Residues 428–440 (PFKTDCDPNNDND) show a composition bias toward polar residues. A disordered region spans residues 428–448 (PFKTDCDPNNDNDLTPPAVFG).

This is an uncharacterized protein from Mycoplasma pneumoniae (strain ATCC 29342 / M129 / Subtype 1) (Mycoplasmoides pneumoniae).